Consider the following 188-residue polypeptide: Elongation factor P (188 aa).

Belongs to the elongation factor P family.

The protein resides in the cytoplasm. The protein operates within protein biosynthesis; polypeptide chain elongation. Involved in peptide bond synthesis. Stimulates efficient translation and peptide-bond synthesis on native or reconstituted 70S ribosomes in vitro. Probably functions indirectly by altering the affinity of the ribosome for aminoacyl-tRNA, thus increasing their reactivity as acceptors for peptidyl transferase. The protein is Elongation factor P of Azotobacter vinelandii (strain DJ / ATCC BAA-1303).